A 485-amino-acid polypeptide reads, in one-letter code: Glutamyl-tRNA(Gln) amidotransferase subunit A (485 aa).

Residues lysine 79 and serine 154 each act as charge relay system in the active site. Serine 178 (acyl-ester intermediate) is an active-site residue.

Belongs to the amidase family. GatA subfamily. In terms of assembly, heterotrimer of A, B and C subunits.

The catalysed reaction is L-glutamyl-tRNA(Gln) + L-glutamine + ATP + H2O = L-glutaminyl-tRNA(Gln) + L-glutamate + ADP + phosphate + H(+). Allows the formation of correctly charged Gln-tRNA(Gln) through the transamidation of misacylated Glu-tRNA(Gln) in organisms which lack glutaminyl-tRNA synthetase. The reaction takes place in the presence of glutamine and ATP through an activated gamma-phospho-Glu-tRNA(Gln). This is Glutamyl-tRNA(Gln) amidotransferase subunit A from Staphylococcus carnosus (strain TM300).